A 417-amino-acid chain; its full sequence is Tyrosine--tRNA ligase (417 aa).

An L-tyrosine-binding site is contributed by Tyr-39. The short motif at 44-53 is the 'HIGH' region element; it reads PTAPSLHAGG. The L-tyrosine site is built by Tyr-176 and Gln-180. Residues 236–240 carry the 'KMSKS' region motif; the sequence is KMGKS. Lys-239 is an ATP binding site. Residues 350–417 enclose the S4 RNA-binding domain; that stretch reads IGVLALMVLA…KKRHVLIRPA (68 aa).

It belongs to the class-I aminoacyl-tRNA synthetase family. TyrS type 1 subfamily. Homodimer.

The protein resides in the cytoplasm. It catalyses the reaction tRNA(Tyr) + L-tyrosine + ATP = L-tyrosyl-tRNA(Tyr) + AMP + diphosphate + H(+). Its function is as follows. Catalyzes the attachment of tyrosine to tRNA(Tyr) in a two-step reaction: tyrosine is first activated by ATP to form Tyr-AMP and then transferred to the acceptor end of tRNA(Tyr). The chain is Tyrosine--tRNA ligase from Brucella suis biovar 1 (strain 1330).